A 405-amino-acid chain; its full sequence is MKFVDEVSIFVKAGDGGNGMMSFRREKFIEKGGPNGGDGGDGGSVYLEADENLNTLVDYRYTRRFEAQRGEKGGSNDCTGAKGDDLILPVPVGTTVIDSGTQEIIGDLVRPGQRLLVAQGGWHGLGNTRFKSSTNRAPRQTTPGKPGEARDLKLELKVLADVGLLGLPNAGKSTFIRAVSAAKPKVADYPFTTLVPNLGVVSVGRYKSFVVADIPGLIEGAAEGAGLGIRFLKHLARTRLLLHLVDMAPLDGGDPAGAAETILRELEKFSPALTERERWLVLNKADQLLDEEREERLRAVLERLDWQGPVYVISALEREGTEALCQDIMHYLDERARRIAEEPEYAEALAELDRHIEDEARTRLQALDDQRALRRAGLKSADALEDEDDFDDEDDGDGPEIFYVR.

In terms of domain architecture, Obg spans 1-159; the sequence is MKFVDEVSIF…RDLKLELKVL (159 aa). Residues 127 to 148 are disordered; that stretch reads NTRFKSSTNRAPRQTTPGKPGE. Positions 129–143 are enriched in polar residues; that stretch reads RFKSSTNRAPRQTTP. In terms of domain architecture, OBG-type G spans 160 to 333; sequence ADVGLLGLPN…LCQDIMHYLD (174 aa). Residues 166 to 173, 191 to 195, 213 to 216, 283 to 286, and 314 to 316 contribute to the GTP site; these read GLPNAGKS, FTTLV, DIPG, NKAD, and SAL. 2 residues coordinate Mg(2+): serine 173 and threonine 193. A compositionally biased stretch (acidic residues) spans 383-398; the sequence is ALEDEDDFDDEDDGDG. Residues 383–405 form a disordered region; that stretch reads ALEDEDDFDDEDDGDGPEIFYVR.

Belongs to the TRAFAC class OBG-HflX-like GTPase superfamily. OBG GTPase family. Monomer. The cofactor is Mg(2+).

Its subcellular location is the cytoplasm. Its function is as follows. An essential GTPase which binds GTP, GDP and possibly (p)ppGpp with moderate affinity, with high nucleotide exchange rates and a fairly low GTP hydrolysis rate. Plays a role in control of the cell cycle, stress response, ribosome biogenesis and in those bacteria that undergo differentiation, in morphogenesis control. The sequence is that of GTPase Obg from Azotobacter vinelandii (strain DJ / ATCC BAA-1303).